The primary structure comprises 244 residues: Probable phosphatase CA_C0509 (244 aa).

Zn(2+)-binding residues include histidine 8, histidine 10, histidine 16, histidine 41, glutamate 74, histidine 102, histidine 132, aspartate 193, and histidine 195.

The protein belongs to the PHP family. Requires Zn(2+) as cofactor.

This is Probable phosphatase CA_C0509 from Clostridium acetobutylicum (strain ATCC 824 / DSM 792 / JCM 1419 / IAM 19013 / LMG 5710 / NBRC 13948 / NRRL B-527 / VKM B-1787 / 2291 / W).